The sequence spans 123 residues: Small ribosomal subunit protein uS12c (123 aa).

The protein belongs to the universal ribosomal protein uS12 family. As to quaternary structure, part of the 30S ribosomal subunit.

It is found in the plastid. The protein localises to the chloroplast. With S4 and S5 plays an important role in translational accuracy. Located at the interface of the 30S and 50S subunits. This is Small ribosomal subunit protein uS12c (rps12) from Marchantia polymorpha (Common liverwort).